The following is a 436-amino-acid chain: Trigger factor (436 aa).

Positions 161–246 constitute a PPIase FKBP-type domain; it reads EDQLNIDFVG…VNSVSEPKLP (86 aa).

The protein belongs to the FKBP-type PPIase family. Tig subfamily.

It is found in the cytoplasm. It carries out the reaction [protein]-peptidylproline (omega=180) = [protein]-peptidylproline (omega=0). Functionally, involved in protein export. Acts as a chaperone by maintaining the newly synthesized protein in an open conformation. Functions as a peptidyl-prolyl cis-trans isomerase. The protein is Trigger factor of Pseudomonas fluorescens (strain SBW25).